The sequence spans 92 residues: Large ribosomal subunit protein bL27 (92 aa).

The segment at 1 to 22 is disordered; the sequence is MAHTKAGGSTRNGRDSRGQRLG.

It belongs to the bacterial ribosomal protein bL27 family.

This chain is Large ribosomal subunit protein bL27, found in Mycoplasmopsis agalactiae (strain NCTC 10123 / CIP 59.7 / PG2) (Mycoplasma agalactiae).